The primary structure comprises 338 residues: DNA-directed RNA polymerase subunit alpha (338 aa).

The segment at 1–234 (MIQKNWQELI…DQLNVFVNFE (234 aa)) is alpha N-terminal domain (alpha-NTD). Positions 250 to 338 (FNPALLKKVD…ELAKRFEEHY (89 aa)) are alpha C-terminal domain (alpha-CTD).

Belongs to the RNA polymerase alpha chain family. As to quaternary structure, homodimer. The RNAP catalytic core consists of 2 alpha, 1 beta, 1 beta' and 1 omega subunit. When a sigma factor is associated with the core the holoenzyme is formed, which can initiate transcription.

The enzyme catalyses RNA(n) + a ribonucleoside 5'-triphosphate = RNA(n+1) + diphosphate. In terms of biological role, DNA-dependent RNA polymerase catalyzes the transcription of DNA into RNA using the four ribonucleoside triphosphates as substrates. This is DNA-directed RNA polymerase subunit alpha from Beijerinckia indica subsp. indica (strain ATCC 9039 / DSM 1715 / NCIMB 8712).